We begin with the raw amino-acid sequence, 201 residues long: Recombination protein RecR (201 aa).

The C4-type zinc-finger motif lies at 57–72 (CADCRTFTEQPVCTIC). Residues 81–176 (GQICVVESPA…MASRIAHGVP (96 aa)) form the Toprim domain.

The protein belongs to the RecR family.

Functionally, may play a role in DNA repair. It seems to be involved in an RecBC-independent recombinational process of DNA repair. It may act with RecF and RecO. The chain is Recombination protein RecR from Sodalis glossinidius (strain morsitans).